Here is a 691-residue protein sequence, read N- to C-terminus: Guanylate cyclase soluble subunit alpha-1 (691 aa).

Positions 26-65 (PREPLGEATGSGPASTPGQPGVCPGVPDKNPPGRLPRRKT) are disordered. The region spanning 482–609 (TMLFSDIVGF…NNVTLANKFE (128 aa)) is the Guanylate cyclase domain.

The protein belongs to the adenylyl cyclase class-4/guanylyl cyclase family. As to quaternary structure, heterodimer of an alpha and a beta chain.

It localises to the cytoplasm. The enzyme catalyses GTP = 3',5'-cyclic GMP + diphosphate. Activated by nitric oxide in the presence of magnesium or manganese ions. The chain is Guanylate cyclase soluble subunit alpha-1 (GUCY1A1) from Bos taurus (Bovine).